A 188-amino-acid chain; its full sequence is D-glycero-beta-D-manno-heptose-1,7-bisphosphate 7-phosphatase (188 aa).

The Zn(2+) site is built by Cys-92, His-94, Cys-107, and Cys-109.

This sequence belongs to the GmhB family.

The protein localises to the cytoplasm. The enzyme catalyses D-glycero-beta-D-manno-heptose 1,7-bisphosphate + H2O = D-glycero-beta-D-manno-heptose 1-phosphate + phosphate. It functions in the pathway nucleotide-sugar biosynthesis; ADP-L-glycero-beta-D-manno-heptose biosynthesis; ADP-L-glycero-beta-D-manno-heptose from D-glycero-beta-D-manno-heptose 7-phosphate: step 2/4. The protein operates within bacterial outer membrane biogenesis; LPS core biosynthesis. Functionally, converts the D-glycero-beta-D-manno-heptose 1,7-bisphosphate intermediate into D-glycero-beta-D-manno-heptose 1-phosphate by removing the phosphate group at the C-7 position. The sequence is that of D-glycero-beta-D-manno-heptose-1,7-bisphosphate 7-phosphatase (gmhB1) from Photorhabdus laumondii subsp. laumondii (strain DSM 15139 / CIP 105565 / TT01) (Photorhabdus luminescens subsp. laumondii).